Here is a 175-residue protein sequence, read N- to C-terminus: Ribosome maturation factor RimM (175 aa).

The PRC barrel domain occupies 96–172 (PDTYYDHQLE…LIEIDPPDGL (77 aa)).

The protein belongs to the RimM family. As to quaternary structure, binds ribosomal protein uS19.

It localises to the cytoplasm. In terms of biological role, an accessory protein needed during the final step in the assembly of 30S ribosomal subunit, possibly for assembly of the head region. Essential for efficient processing of 16S rRNA. May be needed both before and after RbfA during the maturation of 16S rRNA. It has affinity for free ribosomal 30S subunits but not for 70S ribosomes. The sequence is that of Ribosome maturation factor RimM from Mycobacterium avium (strain 104).